We begin with the raw amino-acid sequence, 359 residues long: Olfactory receptor 5T2 (359 aa).

Over 1 to 64 (MSYSIYKSTV…GFTDNLELQT (64 aa)) the chain is Extracellular. Asparagine 44 is a glycosylation site (N-linked (GlcNAc...) asparagine). A helical transmembrane segment spans residues 65 to 85 (IFFFLFLAIYLFTLMGNLGLI). At 86–93 (LVVIRDSQ) the chain is on the cytoplasmic side. Residues 94 to 114 (LHKPMYYFLSMLSSVDACYSS) traverse the membrane as a helical segment. Residues 115–138 (VITPNMLVDFTTKNKVISFLGCVA) lie on the Extracellular side of the membrane. Residues 139 to 159 (QVFLACSFGTTECFLLAAMAY) traverse the membrane as a helical segment. At 160-178 (DRYVAIYNPLLYSVSMSPR) the chain is on the cytoplasmic side. Residues 179–199 (VYMPLINASYVAGILHATIHT) form a helical membrane-spanning segment. The Extracellular segment spans residues 200–235 (VATFSLSFCGANEIRRVFCDIPPLLAISYSDTHTNQ). A helical membrane pass occupies residues 236-256 (LLLFYFVGSIELVTILIVLIS). Residues 257-276 (YGLILLAILKMYSAEGRRKV) lie on the Cytoplasmic side of the membrane. Residues 277–297 (FSTCGAHLTGVSIYYGTILFM) form a helical membrane-spanning segment. Residues 298–310 (YVRPSSSYASDHD) lie on the Extracellular side of the membrane. Residues 311-331 (MIVSIFYTIVIPLLNPVIYSL) form a helical membrane-spanning segment. Residues 332-359 (RNKDVKDSMKKMFGKNQVINKVYFHTKK) lie on the Cytoplasmic side of the membrane.

This sequence belongs to the G-protein coupled receptor 1 family.

Its subcellular location is the cell membrane. Its function is as follows. Odorant receptor. In Homo sapiens (Human), this protein is Olfactory receptor 5T2 (OR5T2).